Here is a 182-residue protein sequence, read N- to C-terminus: MSKQLNPVVPEQPIVLGKMGSTYGIRGWLRVFSSTENAESIFDYQPWFIQQGGKWQHVELEDWKRHSQDLIIKVKGVDDRDAANLLTNCEIVVDSKQLPELEEDDYYWKDLMGCQVVTTAGYELGKIIDMMETGSNDVMVVKANLKDAFGMKERLVPFLHGQVIKNVDLTAQRVEVDWDPGF.

The 80-residue stretch at E103–F182 folds into the PRC barrel domain.

This sequence belongs to the RimM family. As to quaternary structure, binds ribosomal protein uS19.

It is found in the cytoplasm. Its function is as follows. An accessory protein needed during the final step in the assembly of 30S ribosomal subunit, possibly for assembly of the head region. Essential for efficient processing of 16S rRNA. May be needed both before and after RbfA during the maturation of 16S rRNA. It has affinity for free ribosomal 30S subunits but not for 70S ribosomes. In Yersinia enterocolitica serotype O:8 / biotype 1B (strain NCTC 13174 / 8081), this protein is Ribosome maturation factor RimM.